The following is a 95-amino-acid chain: MPRSLKKGPFVDDHLLKKVDAQNERREKRVIKTWSRRSTIVPEMIGHTIAVHNGKQHVPVFINEQMIGHKLGEFSPTRTYRGHGADKNAKGSKKK.

The disordered stretch occupies residues 73 to 95; that stretch reads EFSPTRTYRGHGADKNAKGSKKK.

The protein belongs to the universal ribosomal protein uS19 family.

Its function is as follows. Protein S19 forms a complex with S13 that binds strongly to the 16S ribosomal RNA. The protein is Small ribosomal subunit protein uS19 of Deinococcus geothermalis (strain DSM 11300 / CIP 105573 / AG-3a).